A 957-amino-acid chain; its full sequence is ERC protein 2 (957 aa).

A compositionally biased stretch (polar residues) spans 1–13 (MYGSARTISNLEG). The interval 1-44 (MYGSARTISNLEGSPSRSPRLPRSPRLGHRRTSSGGGGGTGKTL) is disordered. A compositionally biased stretch (low complexity) spans 14–25 (SPSRSPRLPRSP). Phosphoserine is present on residues Ser-65 and Ser-666. Residues 140–917 (RQVRDSTMLD…RMKLMADNYD (778 aa)) adopt a coiled-coil conformation. The segment covering 922 to 943 (HYHHHHHHHHHRSPGRSQHSNH) has biased composition (basic residues). The tract at residues 922–957 (HYHHHHHHHHHRSPGRSQHSNHRPSPDQDDEEGIWA) is disordered. Over residues 948–957 (DQDDEEGIWA) the composition is skewed to acidic residues.

In terms of assembly, interacts with BSN, ERC1, PPFIA1, PPFIA2, PPFIA3 and PPFIA4. Interacts through its C-terminus with the PDZ domain of RIMS1. Part of a complex consisting of ERC2, RIMS1 and UNC13A. In terms of tissue distribution, expressed throughout the central nervous system, including hippocampus, cortex, cerebellum and olfactory bulb.

The protein localises to the cytoplasm. It localises to the synapse. The protein resides in the presynaptic active zone. It is found in the cytoskeleton. Functionally, thought to be involved in the organization of the cytomatrix at the nerve terminals active zone (CAZ) which regulates neurotransmitter release. Seems to act together with BSN. May recruit liprin-alpha proteins to the CAZ. The chain is ERC protein 2 (Erc2) from Mus musculus (Mouse).